Consider the following 333-residue polypeptide: Ribosomal protein L11 methyltransferase (333 aa).

S-adenosyl-L-methionine is bound by residues T160, G181, D203, and N267.

The protein belongs to the methyltransferase superfamily. PrmA family.

The protein localises to the cytoplasm. The enzyme catalyses L-lysyl-[protein] + 3 S-adenosyl-L-methionine = N(6),N(6),N(6)-trimethyl-L-lysyl-[protein] + 3 S-adenosyl-L-homocysteine + 3 H(+). Functionally, methylates ribosomal protein L11. In Lachnoclostridium phytofermentans (strain ATCC 700394 / DSM 18823 / ISDg) (Clostridium phytofermentans), this protein is Ribosomal protein L11 methyltransferase.